The chain runs to 926 residues: Armadillo repeat-containing protein 5 (926 aa).

Positions 82-104 are enriched in low complexity; the sequence is PAPSQAASGSAPSSVASAGSTPG. Residues 82–111 form a disordered region; that stretch reads PAPSQAASGSAPSSVASAGSTPGHAPAAES. 7 ARM repeats span residues 139 to 179, 181 to 221, 223 to 263, 267 to 306, 307 to 354, 355 to 399, and 401 to 440; these read GACR…NLAM, PESC…NLAD, PQHR…ELSR, RACA…NLCA, QGLV…LCRE, AINR…DTGA, and GKLQ…EERT. Ser-337 carries the post-translational modification Phosphoserine. The segment at 472–516 is disordered; sequence WSPERCPMPEPSESVSPTPGQTSMSTPRTLRKPGRIPAATPEEPW. Over residues 484–499 the composition is skewed to polar residues; the sequence is ESVSPTPGQTSMSTPR. The region spanning 745–813 is the BTB domain; the sequence is PDLHFVLDSG…LHGCRGCGAA (69 aa).

In terms of assembly, substrate-recognition component of the BCR(ARMC5) E3 ubiquitin ligase complex, at least composed of CUL3, ARMC5 and RBX1. Ubiquitinated by a BCR (BTB-CUL3-RBX1) E3 ubiquitin ligase complex, leading to its degradation. Deubiquitinated by USP7. In terms of tissue distribution, expression is high in the thymus, stomach, bone marrow and lymphatic tissues (including lymph nodes and intestinal wall). Also expressed in the adrenal gland, skin and in brain structures, with noticeable levels found in the cerebellum.

It localises to the nucleus. The protein localises to the chromosome. The protein resides in the cytoplasm. Its pathway is protein modification; protein ubiquitination. Functionally, substrate-recognition component of a BCR (BTB-CUL3-RBX1) E3 ubiquitin ligase complex that terminates RNA polymerase II (Pol II) transcription in the promoter-proximal region of genes. The BCR(ARMC5) complex provides a quality checkpoint during transcription elongation by driving premature transcription termination of transcripts that are unfavorably configured for transcriptional elongation: the BCR(ARMC5) complex acts by mediating ubiquitination of Pol II subunit POLR2A phosphorylated at 'Ser-5' of the C-terminal domain (CTD), leading to POLR2A degradation. The BCR(ARMC5) complex acts in parallel of the integrator complex and is specific for RNA Pol II originating from the promoter-proximal zone: it does not ubiquitinate elongation-stalled RNA Pol II. The BCR(ARMC5) complex also acts as a regulator of fatty acid desaturation by mediating ubiquitination and degradation of SCAP-free SREBF1 and SREBF2. Involved in fetal development, T-cell function and adrenal gland growth homeostasis. Plays a role in steroidogenesis, modulates steroidogenic enzymes expression and cortisol production. The chain is Armadillo repeat-containing protein 5 from Mus musculus (Mouse).